Reading from the N-terminus, the 131-residue chain is Small ribosomal subunit protein uS8 (131 aa).

It belongs to the universal ribosomal protein uS8 family. Part of the 30S ribosomal subunit. Contacts proteins S5 and S12.

In terms of biological role, one of the primary rRNA binding proteins, it binds directly to 16S rRNA central domain where it helps coordinate assembly of the platform of the 30S subunit. This is Small ribosomal subunit protein uS8 from Prosthecochloris aestuarii (strain DSM 271 / SK 413).